A 578-amino-acid chain; its full sequence is Proteasome-associated ATPase (578 aa).

Positions 8–84 form a coiled coil; the sequence is TAAELRNQVR…LKEEVDRLAQ (77 aa). 267–272 serves as a coordination point for ATP; the sequence is GCGKTL. Residues 577–578 form a docks into pockets in the proteasome alpha-ring region; sequence YL.

This sequence belongs to the AAA ATPase family. As to quaternary structure, homohexamer. Assembles into a hexameric ring structure that caps the 20S proteasome core. Strongly interacts with the prokaryotic ubiquitin-like protein Pup through a hydrophobic interface; the interacting region of ARC lies in its N-terminal coiled-coil domain. There is one Pup binding site per ARC hexamer ring. Upon ATP-binding, the C-terminus of ARC interacts with the alpha-rings of the proteasome core, possibly by binding to the intersubunit pockets.

Its pathway is protein degradation; proteasomal Pup-dependent pathway. In terms of biological role, ATPase which is responsible for recognizing, binding, unfolding and translocation of pupylated proteins into the bacterial 20S proteasome core particle. May be essential for opening the gate of the 20S proteasome via an interaction with its C-terminus, thereby allowing substrate entry and access to the site of proteolysis. Thus, the C-termini of the proteasomal ATPase may function like a 'key in a lock' to induce gate opening and therefore regulate proteolysis. This chain is Proteasome-associated ATPase, found in Kribbella flavida (strain DSM 17836 / JCM 10339 / NBRC 14399).